A 330-amino-acid polypeptide reads, in one-letter code: Pseudouridine-5'-phosphate glycosidase (330 aa).

E50 functions as the Proton donor in the catalytic mechanism. Substrate-binding residues include K112 and V132. Residue D164 participates in Mn(2+) binding. 166–168 (SSD) serves as a coordination point for substrate. Catalysis depends on K185, which acts as the Nucleophile.

It belongs to the pseudouridine-5'-phosphate glycosidase family. Homotrimer. Mn(2+) serves as cofactor.

It localises to the peroxisome. The catalysed reaction is D-ribose 5-phosphate + uracil = psi-UMP + H2O. Catalyzes the reversible cleavage of pseudouridine 5'-phosphate (PsiMP) to ribose 5-phosphate and uracil. Functions biologically in the cleavage direction, as part of a pseudouridine degradation pathway. Acts together with the pseudouridine kinase PUKI in the peroxisome to prevent toxic pseudouridine monophosphate accumulation. Can catalyze the formation of pseudouridine 5'-phosphate (reverse reaction) in vitro, with a catalytic efficiency 4 times lower than the hydrolysis reaction. The chain is Pseudouridine-5'-phosphate glycosidase from Arabidopsis thaliana (Mouse-ear cress).